The sequence spans 485 residues: NADH-quinone oxidoreductase subunit N (485 aa).

Transmembrane regions (helical) follow at residues 8-28, 35-55, 71-91, 105-125, 127-147, 159-179, 203-223, 235-255, 271-291, 297-317, 326-346, 373-393, 408-430, and 455-475; these read LIAL…MLSI, FLNA…LWFV, GFAM…CTFA, FYLL…ANHL, ALFL…GYAF, YTIL…LVYA, LLAG…LVPF, PAPV…GVVM, VVLG…ALSQ, LLGY…IALQ, VGVY…VVSL, AAVM…LGFI, WWLV…RVAV, and IVVL…QPLI.

The protein belongs to the complex I subunit 2 family. As to quaternary structure, NDH-1 is composed of 13 different subunits. Subunits NuoA, H, J, K, L, M, N constitute the membrane sector of the complex.

The protein resides in the cell inner membrane. The enzyme catalyses a quinone + NADH + 5 H(+)(in) = a quinol + NAD(+) + 4 H(+)(out). Its function is as follows. NDH-1 shuttles electrons from NADH, via FMN and iron-sulfur (Fe-S) centers, to quinones in the respiratory chain. The immediate electron acceptor for the enzyme in this species is believed to be ubiquinone. Couples the redox reaction to proton translocation (for every two electrons transferred, four hydrogen ions are translocated across the cytoplasmic membrane), and thus conserves the redox energy in a proton gradient. This chain is NADH-quinone oxidoreductase subunit N, found in Salmonella schwarzengrund (strain CVM19633).